The primary structure comprises 517 residues: Tyrosine-protein kinase Src42A (517 aa).

Residues 1–47 are disordered; sequence MGNCLTTQKGEPDKPADRIKLDDPPTIGVGVGVPQIPMPSHAGQPPE. Basic and acidic residues predominate over residues 10–23; that stretch reads GEPDKPADRIKLDD. The SH3 domain occupies 63–124; it reads ANAKIFVALY…PSNYVAKLKS (62 aa). One can recognise an SH2 domain in the interval 130–222; that stretch reads WYFRKIKRIE…GLCVNLCKPC (93 aa). Residues 248 to 504 enclose the Protein kinase domain; sequence LKFVRKLGSG…TLQWKLEDFY (257 aa). Residues 254–262 and Lys276 each bind ATP; that span reads LGSGQFGDV. The active-site Proton acceptor is the Asp370.

It belongs to the protein kinase superfamily. Tyr protein kinase family. SRC subfamily. In terms of tissue distribution, ubiquitous in early embryos, in stages 13-16 expression is seen in visceral mesoderm, hindgut, brain, anal pads and ventral ganglions. In larvae, expression is in CNS, wing disk, leg disk and photoreceptor precursors in the eye-antenna disks posterior to the morphogenetic furrow.

The enzyme catalyses L-tyrosyl-[protein] + ATP = O-phospho-L-tyrosyl-[protein] + ADP + H(+). In terms of biological role, required directly or indirectly for the phosphorylation of drpr which is necessary for the interaction of drpr with shark and subsequent glial phagocytic activity. Together with drpr and shark, promotes the migration of macrophages to sites of wounding as part of a signaling cascade where Src42A detects production of hydrogen peroxide at wound sites which triggers phosphorylation of drpr and subsequent recruitment and activation of shark. Essential for correct eye morphogenesis (ommatidial R7 neuron formation) which requires the Ras1/MAPK signal transduction pathway. May be involved in the regulation of cytoskeleton organization and cell-cell contacts in developing ommatidia. Involved in phosphorylation of Dscam1, a cell surface receptor involved in targeting of growing axons during eye morphogenesis, and its interaction partner the SH2/SH3 adapter protein dock/dreadlocks. During embryogenesis, involved in regulation of dorsal closure where it may have a role in activating the JNK pathway in leading edge cells during this process. In Drosophila melanogaster (Fruit fly), this protein is Tyrosine-protein kinase Src42A.